The chain runs to 223 residues: Endonuclease V (223 aa).

The Mg(2+) site is built by Asp-35 and Asp-103.

Belongs to the endonuclease V family. Requires Mg(2+) as cofactor.

It is found in the cytoplasm. The enzyme catalyses Endonucleolytic cleavage at apurinic or apyrimidinic sites to products with a 5'-phosphate.. Functionally, DNA repair enzyme involved in the repair of deaminated bases. Selectively cleaves double-stranded DNA at the second phosphodiester bond 3' to a deoxyinosine leaving behind the intact lesion on the nicked DNA. This is Endonuclease V from Escherichia coli O45:K1 (strain S88 / ExPEC).